Reading from the N-terminus, the 931-residue chain is Netrin receptor UNC5C (931 aa).

The first 40 residues, 1-40 (MRKGLRATAARCGLGLGYLLQMLVLPALALLSASGTGSAA), serve as a signal peptide directing secretion. Residues 41-380 (QDDEFFHELP…APDSDDVALY (340 aa)) lie on the Extracellular side of the membrane. The Ig-like domain maps to 62-159 (PHFLIEPEEA…AGTTKSRKAY (98 aa)). Disulfide bonds link C83–C144, C95–C142, C188–C239, C272–C309, C276–C313, C287–C299, C328–C362, C332–C367, and C340–C352. The Ig-like C2-type domain occupies 161–256 (RIAYLRKTFE…KRKSTTATVI (96 aa)). N236 carries N-linked (GlcNAc...) asparagine glycosylation. 2 TSP type-1 domains span residues 260–314 (NGGW…TLCP) and 316–368 (DGRW…GLCM). N361 carries an N-linked (GlcNAc...) asparagine glycan. A helical transmembrane segment spans residues 381–401 (VGIVIAVTVCLAITVVVALFV). At 402–931 (YRKNHRDFES…VVSLAAEGQY (530 aa)) the chain is on the cytoplasmic side. Residues 402–931 (YRKNHRDFES…VVSLAAEGQY (530 aa)) form a required for netrin-mediated axon repulsion of neuronal growth cones region. The residue at position 502 (S502) is a Phosphoserine. The ZU5 domain occupies 530–673 (CTAFGTFNSL…LSTYALVGQS (144 aa)). Residue Y568 is modified to Phosphotyrosine. Residues 694–712 (SLEYSIRVYCLDDTQDALK) form an interaction with DCC region. The Death domain maps to 850–929 (QKLCSSLDAP…ETVVSLAAEG (80 aa)).

It belongs to the unc-5 family. In terms of assembly, interacts with DCC (via cytoplasmic domain). Interacts (tyrosine phosphorylated form) with PTPN11. Interacts (via extracellular domain) with FLRT3 (via extracellular domain). Interacts (via Ig-like C2-type domain) with DSCAM (via extracellular domain). Interacts (via death domain) with DAPK1. Interacts (via cytoplasmic domain) with TUBB3; this interaction is decreased by NTN1/Netrin-1. Post-translationally, phosphorylated on different cytoplasmic tyrosine residues. Phosphorylation of Tyr-568 leads to an interaction with PTPN11 phosphatase, suggesting that its activity is regulated by phosphorylation/dephosphorylation. Tyrosine phosphorylation is netrin-dependent. In terms of processing, proteolytically cleaved by caspases during apoptosis. The cleavage does not take place when the receptor is associated with netrin ligand. Its cleavage by caspases is required to induce apoptosis. Expressed in cortical and cerebellar neurons, including cells of the external and internal granular layer and of the Purkinje cell layer (at protein level). Mainly expressed in regions of differentiating neurons. Highly expressed in brain and lung. Expressed in the cerebellum and the neurons of the hippocampus, with enrichment in neurons of the CA3 hippocampal pyramidal layer. Weakly expressed in testis, ovary, spleen, thymus and bladder. Expressed at very low level in kidney, intestine and salivary gland.

The protein resides in the cell membrane. It localises to the cell surface. The protein localises to the synapse. It is found in the synaptosome. Its subcellular location is the cell projection. The protein resides in the dendrite. It localises to the axon. The protein localises to the growth cone. It is found in the lamellipodium. Its subcellular location is the filopodium. Its function is as follows. Receptor for netrin required for axon guidance. Mediates axon repulsion of neuronal growth cones in the developing nervous system upon ligand binding. NTN1/Netrin-1 binding might cause dissociation of UNC5C from polymerized TUBB3 in microtubules and thereby lead to increased microtubule dynamics and axon repulsion. Axon repulsion in growth cones may also be caused by its association with DCC that may trigger signaling for repulsion. Might also collaborate with DSCAM in NTN1-mediated axon repulsion independently of DCC. Also involved in corticospinal tract axon guidance independently of DCC. Involved in dorsal root ganglion axon projection towards the spinal cord. It also acts as a dependence receptor required for apoptosis induction when not associated with netrin ligand. The protein is Netrin receptor UNC5C (Unc5c) of Mus musculus (Mouse).